The primary structure comprises 147 residues: Bis(5'-nucleosyl)-tetraphosphatase [asymmetrical] (147 aa).

A Nudix hydrolase domain is found at 1–139 (MALRACGLII…EMKAALQEGH (139 aa)). Alanine 2 carries the post-translational modification N-acetylalanine. The short motif at 43 to 64 (GHVEPGEDDLETALRETQEEAG) is the Nudix box element.

Belongs to the Nudix hydrolase family. A divalent metal cation is required as a cofactor.

It carries out the reaction P(1),P(4)-bis(5'-guanosyl) tetraphosphate + H2O = GMP + GTP + 2 H(+). The catalysed reaction is a 5'-end CoA-ribonucleoside in mRNA + H2O = a 5'-end phospho-adenosine-phospho-ribonucleoside in mRNA + (R)-4'-phosphopantetheine + 2 H(+). The enzyme catalyses a 5'-end FAD-phospho-ribonucleoside in mRNA + H2O = a 5'-end phospho-adenosine-phospho-ribonucleoside in mRNA + FMN + 2 H(+). Its function is as follows. Catalyzes the asymmetric hydrolysis of diadenosine 5',5'''-P1,P4-tetraphosphate (Ap4A) to yield AMP and ATP. Exhibits decapping activity towards FAD-capped RNAs and dpCoA-capped RNAs in vitro. This chain is Bis(5'-nucleosyl)-tetraphosphatase [asymmetrical] (NUDT2), found in Homo sapiens (Human).